We begin with the raw amino-acid sequence, 389 residues long: Terminal nucleotidyltransferase 5D (389 aa).

This sequence belongs to the TENT family. In terms of tissue distribution, restricted to testis.

The enzyme catalyses RNA(n) + ATP = RNA(n)-3'-adenine ribonucleotide + diphosphate. Its function is as follows. Catalyzes the transfer of one adenosine molecule from an ATP to an mRNA poly(A) tail bearing a 3'-OH terminal group. This is Terminal nucleotidyltransferase 5D from Homo sapiens (Human).